Here is a 130-residue protein sequence, read N- to C-terminus: Small ribosomal subunit protein uS11 (130 aa).

This sequence belongs to the universal ribosomal protein uS11 family. As to quaternary structure, part of the 30S ribosomal subunit. Interacts with proteins S7 and S18. Binds to IF-3.

Its function is as follows. Located on the platform of the 30S subunit, it bridges several disparate RNA helices of the 16S rRNA. Forms part of the Shine-Dalgarno cleft in the 70S ribosome. In Dehalococcoides mccartyi (strain ATCC BAA-2100 / JCM 16839 / KCTC 5957 / BAV1), this protein is Small ribosomal subunit protein uS11.